A 198-amino-acid polypeptide reads, in one-letter code: Fe/S biogenesis protein NfuA (198 aa).

Residues C155 and C158 each coordinate [4Fe-4S] cluster.

The protein belongs to the NfuA family. In terms of assembly, homodimer. It depends on [4Fe-4S] cluster as a cofactor.

Its function is as follows. Involved in iron-sulfur cluster biogenesis. Binds a 4Fe-4S cluster, can transfer this cluster to apoproteins, and thereby intervenes in the maturation of Fe/S proteins. Could also act as a scaffold/chaperone for damaged Fe/S proteins. This chain is Fe/S biogenesis protein NfuA, found in Haemophilus influenzae (strain 86-028NP).